The sequence spans 829 residues: Protein roadkill (829 aa).

Composition is skewed to low complexity over residues 24–36 (EQQQ…QQQQ), 122–140 (TPAA…QAAP), and 266–288 (SSSS…SSSS). Disordered regions lie at residues 24 to 47 (EQQQ…CCEN), 106 to 142 (SSLQ…APSV), 266 to 296 (SSSS…SHHS), and 313 to 400 (HLNQ…NQQQ). A compositionally biased stretch (basic residues) spans 313 to 322 (HLNQQQHHHP). Composition is skewed to low complexity over residues 323 to 353 (LSAS…QQQH), 372 to 382 (SSSSSSSSSSS), and 389 to 400 (SSSSSNSNNQQQ). In terms of domain architecture, MATH spans 486 to 616 (KFSYMWTINN…EDKLTIFCEV (131 aa)). A BTB domain is found at 655–722 (SDVTLSVGGR…IYTGKAPNLE (68 aa)).

The protein belongs to the Tdpoz family. Interacts with ci and gft/CUL3. Expressed near the anterio-posterior compartment boundary of antenna, leg and wing disks.

The protein resides in the nucleus. It functions in the pathway protein modification; protein ubiquitination. Involved in segment polarity. In complex with gft/CUL3, promotes ubiquitination of ci and its subsequent degradation by the proteasome, which results in hh signaling attenuation. This regulation may be important during eye formation for proper packing of ommatidia into a hexagonal array. This chain is Protein roadkill (rdx), found in Drosophila melanogaster (Fruit fly).